Reading from the N-terminus, the 420-residue chain is MFALIDVNGMYASCEQAFRPDLANRAVAVLSNNDGNIVARNYLAKKAGLKMGDPYFKVRPIIERHNIAIFSSNYTLYASMSARFAAVVESLASHVEQYSIDELFVDCKGITAAMSLDAFGRQLREEVRRHTTLVCGVGIARTKTLAKLCNHAAKTWPATGGVVALDDGARLKKLMSILPVAEVWGVGHRTEKALATMGIKTVLDLARADTRLIRKTFGVVLERTVRELRGEACFSLEENPPAKQQIVVSRSFGQRVETLTDMQQAVTGFAARAAEKLRNERQYCRVISVFIRTSPYSVRDTQYANQATEKLTVATQDSRTIIQAAQALARIWREDIAYAKAGVMLADFSGKEAQLDLFDSATPSAGSEALMAVLDGINRRGKNQLFFAGQGIDNSFAMRRQMLSPDYTTDWRSIPIATIK.

The region spanning 2-187 is the UmuC domain; it reads FALIDVNGMY…LPVAEVWGVG (186 aa).

It belongs to the DNA polymerase type-Y family.

Its function is as follows. Involved in UV protection and mutation. This is Protein MucB (mucB) from Escherichia coli.